A 115-amino-acid chain; its full sequence is Basic leucine zipper transcriptional factor ATF-like (115 aa).

The disordered stretch occupies residues 1 to 57 (MQQEPDRNEQGYCSSPPSSNKQDSSDDTKKIQRREKNRIAAQKSRQRQTQKADSLHI). Residues 27–90 (DTKKIQRREK…KYLTCVLSTH (64 aa)) enclose the bZIP domain. The interval 29-51 (KKIQRREKNRIAAQKSRQRQTQK) is basic motif. Residues 55–83 (LHIESENLERLNSALRGEISGLREELKYL) form a leucine-zipper region.

This sequence belongs to the bZIP family.

It localises to the nucleus. The protein localises to the cytoplasm. AP-1 family transcription factor that controls the differentiation of lineage-specific cells in the immune system: specifically mediates the differentiation of T-helper 17 cells (Th17), follicular T-helper cells (TfH), CD8(+) dendritic cells and class-switch recombination (CSR) in B-cells. This is Basic leucine zipper transcriptional factor ATF-like (batf) from Xenopus tropicalis (Western clawed frog).